The chain runs to 147 residues: uncharacterized protein (147 aa).

The Rhodanese domain maps to 52-145; sequence YDRCLLIIDA…WLSNNYPTVC (94 aa).

This is an uncharacterized protein from Buchnera aphidicola subsp. Baizongia pistaciae (strain Bp).